We begin with the raw amino-acid sequence, 179 residues long: Prion-like protein doppel (179 aa).

The signal sequence occupies residues M1 to K25. The flexible tail stretch occupies residues R27 to A50. The interval R51–G155 is globular. Intrachain disulfides connect C95-C148 and C109-C143. N99 and N111 each carry an N-linked (GlcNAc...) asparagine glycan. The cu(2+) binding stretch occupies residues K125–I142. Residue G155 is the site of GPI-anchor amidated glycine attachment. A propeptide spans A156 to K179 (removed in mature form).

The protein belongs to the prion family. Post-translationally, N-glycosylated. N-glycosylated at two distinct sites. In terms of processing, O-glycosylated. Detected in testis. Detected within seminiferous tubules, on round and elongated spermatids (at protein level). Not detected in brain (at protein level). Detected in testis, and at low levels in heart. Expression in brain is very low and barely detectable.

Its subcellular location is the cell membrane. Its function is as follows. Required for normal acrosome reaction and for normal male fertility. Can bind Cu(2+). This chain is Prion-like protein doppel (Prnd), found in Mus musculus (Mouse).